Reading from the N-terminus, the 325-residue chain is Diadenosine 5',5'''-P1,P4-tetraphosphate phosphorylase 2 (325 aa).

Substrate-binding positions include K53, 92-93 (NK), N148, and 154-157 (GSSQ). Catalysis depends on H161, which acts as the Nucleophile. Substrate-binding positions include Q163, 277-279 (NST), M284, and K288.

The protein belongs to the ATP adenylyltransferase family. In terms of assembly, monomer. Requires a divalent metal cation as cofactor.

The protein localises to the cytoplasm. It is found in the nucleus. The enzyme catalyses ADP + ATP + H(+) = P(1),P(4)-bis(5'-adenosyl) tetraphosphate + phosphate. It catalyses the reaction sulfate + ADP + H(+) = adenosine 5'-phosphosulfate + phosphate. In terms of biological role, ap4A phosphorylase catalyzes the phosphorolytic degradation of bis(5'-adenosyl) tetraphosphate (Ap4A) into ADP and ATP. Can also use other Np4N' nucleotides (where N and N' stand for A,C,G or U) as substrates, but prefers A-containing substrates. Cannot catalyze the reverse reaction. Additionally, this enzyme can also catalyze the phosphorolytic degradation of adenosine 5'-phosphosulfate (AMPS) into ADP and sulfate, the reversible exchange reaction between inorganic phosphate and the beta-phosphate of a nucleoside diphosphate (NDP), and the synthesis of Ap4A from AMPS plus ATP. This is Diadenosine 5',5'''-P1,P4-tetraphosphate phosphorylase 2 from Saccharomyces cerevisiae (strain ATCC 204508 / S288c) (Baker's yeast).